A 473-amino-acid chain; its full sequence is Dol-P-Glc:Glc(2)Man(9)GlcNAc(2)-PP-Dol alpha-1,2-glucosyltransferase (473 aa).

The Cytoplasmic segment spans residues 1–6 (MAQLEG). Residues 7 to 27 (YYFSAALSCTFLVSCLLFSAF) form a helical membrane-spanning segment. The Extracellular portion of the chain corresponds to 28–64 (SRALREPYMDEIFHLPQAQRYCEGHFSLSQWDPMITT). Residues 65–85 (LPGLYLVSIGVIKPAIWIFGW) form a helical membrane-spanning segment. The Cytoplasmic portion of the chain corresponds to 86–97 (SEHVVCSIGMLR). The chain crosses the membrane as a helical span at residues 98–118 (FVNLLFSVGNFYLLYLLFCKV). Residues 119-130 (QPRNKAASSIQR) lie on the Extracellular side of the membrane. The next 2 helical transmembrane spans lie at 131–151 (VLST…FLYY) and 152–172 (TEAG…YGNH). The Extracellular segment spans residues 173–175 (KTS). A helical membrane pass occupies residues 176–196 (AFLGFCGFMFRQTNIIWAVFC). Over 197–249 (AGNVIAQKLTEAWKTELQKKEDRLPPIKGPFAEFRKILQFLLAYSMSFKNLSM) the chain is Cytoplasmic. A helical transmembrane segment spans residues 250 to 270 (LLLLTWPYILLGFLFCAFVVV). Residues 271–283 (NGGIVIGDRSSHE) lie on the Extracellular side of the membrane. The helical transmembrane segment at 284-304 (ACLHFPQLFYFFSFTLFFSFP) threads the bilayer. At 305-323 (HLLSPSKIKTFLSLVWKRR) the chain is on the cytoplasmic side. The chain crosses the membrane as a helical span at residues 324–344 (ILFFVVTLVSVFLVWKFTYAH). Residues 345–367 (KYLLADNRHYTFYVWKRVFQRYE) are Extracellular-facing. Residues 368–388 (TVKYLLVPAYIFAGWSIADSL) form a helical membrane-spanning segment. The Cytoplasmic portion of the chain corresponds to 389–392 (KSKS). The chain crosses the membrane as a helical span at residues 393–413 (IFWNLMFFICLFTVIVPQKLL). Over 414–436 (EFRYFILPYVIYRLNIPLPPTSR) the chain is Extracellular. Residues 437 to 457 (LICELSCYAVVNFITFFIFLN) traverse the membrane as a helical segment. At 458–473 (KTFQWPNSQDIQRFMW) the chain is on the cytoplasmic side.

Belongs to the ALG10 glucosyltransferase family.

Its subcellular location is the endoplasmic reticulum membrane. The catalysed reaction is an alpha-D-Glc-(1-&gt;3)-alpha-D-Glc-(1-&gt;3)-alpha-D-Man-(1-&gt;2)-alpha-D-Man-(1-&gt;2)-alpha-D-Man-(1-&gt;3)-[alpha-D-Man-(1-&gt;2)-alpha-D-Man-(1-&gt;3)-[alpha-D-Man-(1-&gt;2)-alpha-D-Man-(1-&gt;6)]-alpha-D-Man-(1-&gt;6)]-beta-D-Man-(1-&gt;4)-beta-D-GlcNAc-(1-&gt;4)-alpha-D-GlcNAc-diphospho-di-trans,poly-cis-dolichol + a di-trans,poly-cis-dolichyl beta-D-glucosyl phosphate = a alpha-D-Glc-(1-&gt;2)-alpha-D-Glc-(1-&gt;3)-alpha-D-Glc-(1-&gt;3)-alpha-D-Man-(1-&gt;2)-alpha-D-Man-(1-&gt;2)-alpha-D-Man-(1-&gt;3)-[alpha-D-Man-(1-&gt;2)-alpha-D-Man-(1-&gt;3)-[alpha-D-Man-(1-&gt;2)-alpha-D-Man-(1-&gt;6)]-alpha-D-Man-(1-&gt;6)]-beta-D-Man-(1-&gt;4)-beta-D-GlcNAc-(1-&gt;4)-alpha-D-GlcNAc-diphospho-di-trans,poly-cis-dolichol + a di-trans,poly-cis-dolichyl phosphate + H(+). Its pathway is protein modification; protein glycosylation. In terms of biological role, dol-P-Glc:Glc(2)Man(9)GlcNAc(2)-PP-Dol alpha-1,2-glucosyltransferase that operates in the biosynthetic pathway of dolichol-linked oligosaccharides, the glycan precursors employed in protein asparagine (N)-glycosylation. The assembly of dolichol-linked oligosaccharides begins on the cytosolic side of the endoplasmic reticulum membrane and finishes in its lumen. The sequential addition of sugars to dolichol pyrophosphate produces dolichol-linked oligosaccharides containing fourteen sugars, including two GlcNAcs, nine mannoses and three glucoses. Once assembled, the oligosaccharide is transferred from the lipid to nascent proteins by oligosaccharyltransferases. In the lumen of the endoplasmic reticulum, adds the third and last glucose residue from dolichyl phosphate glucose (Dol-P-Glc) onto the lipid-linked oligosaccharide intermediate Glc(2)Man(9)GlcNAc(2)-PP-Dol to produce Glc(3)Man(9)GlcNAc(2)-PP-Dol. The polypeptide is Dol-P-Glc:Glc(2)Man(9)GlcNAc(2)-PP-Dol alpha-1,2-glucosyltransferase (Homo sapiens (Human)).